The primary structure comprises 122 residues: UPF0102 protein Ping_1176 (122 aa).

This sequence belongs to the UPF0102 family.

This Psychromonas ingrahamii (strain DSM 17664 / CCUG 51855 / 37) protein is UPF0102 protein Ping_1176.